We begin with the raw amino-acid sequence, 200 residues long: Dephospho-CoA kinase (200 aa).

Positions 4-200 constitute a DPCK domain; the sequence is VIGLTGGIGS…QKYIKMSHLY (197 aa). 12 to 17 contacts ATP; it reads GSGKTT.

It belongs to the CoaE family.

It localises to the cytoplasm. It catalyses the reaction 3'-dephospho-CoA + ATP = ADP + CoA + H(+). It functions in the pathway cofactor biosynthesis; coenzyme A biosynthesis; CoA from (R)-pantothenate: step 5/5. Catalyzes the phosphorylation of the 3'-hydroxyl group of dephosphocoenzyme A to form coenzyme A. In Photobacterium profundum (strain SS9), this protein is Dephospho-CoA kinase.